The chain runs to 545 residues: Chaperonin GroEL (545 aa).

ATP contacts are provided by residues 29-32 (TLGP), 86-90 (DGTTT), glycine 413, 476-478 (NAA), and aspartate 492.

The protein belongs to the chaperonin (HSP60) family. Forms a cylinder of 14 subunits composed of two heptameric rings stacked back-to-back. Interacts with the co-chaperonin GroES.

It is found in the cytoplasm. It catalyses the reaction ATP + H2O + a folded polypeptide = ADP + phosphate + an unfolded polypeptide.. Its function is as follows. Together with its co-chaperonin GroES, plays an essential role in assisting protein folding. The GroEL-GroES system forms a nano-cage that allows encapsulation of the non-native substrate proteins and provides a physical environment optimized to promote and accelerate protein folding. The chain is Chaperonin GroEL from Shouchella clausii (strain KSM-K16) (Alkalihalobacillus clausii).